The following is a 328-amino-acid chain: MTSISSIAVLGGGAWGTALAQTAARAGRAVTLWEHDATNAQQLQSARESLYLPGVTLEPAIKVTRDLAEAARADAILLVVPAQVLRQVVTSLAPLIGAQTPLIACAKGIEHGTHKFMTEIIAEAAPNALPAILSGPSFAADVARGLPTAVTIAAADAAVAQALAQAMNCGSFRPYHSTDVRGVELGGATKNVMAIAAGIVEGRKLGASALAAMTTRGFVELVRFGTAYGARIETMHGLSGLGDLTMCCSTPQSRNFSFGMALGRGESVATAAHGKLAEGAFTAPVLLEMARAKHVEMPISEAVAAILEGQTTVDAAIGALLTRPLKAE.

Residues Trp-15, His-35, Tyr-51, and Lys-107 each contribute to the NADPH site. Lys-107, Gly-135, and Ser-137 together coordinate sn-glycerol 3-phosphate. Ala-139 is an NADPH binding site. Residues Lys-190, Asp-243, Ser-253, Arg-254, and Asn-255 each coordinate sn-glycerol 3-phosphate. Catalysis depends on Lys-190, which acts as the Proton acceptor. Residue Arg-254 participates in NADPH binding. NADPH-binding residues include Leu-276 and Glu-278.

The protein belongs to the NAD-dependent glycerol-3-phosphate dehydrogenase family.

It is found in the cytoplasm. It catalyses the reaction sn-glycerol 3-phosphate + NAD(+) = dihydroxyacetone phosphate + NADH + H(+). The enzyme catalyses sn-glycerol 3-phosphate + NADP(+) = dihydroxyacetone phosphate + NADPH + H(+). It functions in the pathway membrane lipid metabolism; glycerophospholipid metabolism. Catalyzes the reduction of the glycolytic intermediate dihydroxyacetone phosphate (DHAP) to sn-glycerol 3-phosphate (G3P), the key precursor for phospholipid synthesis. The chain is Glycerol-3-phosphate dehydrogenase [NAD(P)+] from Rhodopseudomonas palustris (strain BisA53).